A 140-amino-acid chain; its full sequence is Methylglyoxal synthase (140 aa).

The region spanning 1–140 (MKIALIAHDR…HEGDRRPLAF (140 aa)) is the MGS-like domain. Substrate contacts are provided by residues His8, Lys12, 34 to 37 (TGTT), and 54 to 55 (SG). The active-site Proton donor/acceptor is Asp60. His87 lines the substrate pocket.

It belongs to the methylglyoxal synthase family.

It catalyses the reaction dihydroxyacetone phosphate = methylglyoxal + phosphate. Its function is as follows. Catalyzes the formation of methylglyoxal from dihydroxyacetone phosphate. The protein is Methylglyoxal synthase of Enterococcus faecalis (strain ATCC 700802 / V583).